Consider the following 361-residue polypeptide: Histidinol-phosphate aminotransferase (361 aa).

Lys-219 is subject to N6-(pyridoxal phosphate)lysine.

Belongs to the class-II pyridoxal-phosphate-dependent aminotransferase family. Histidinol-phosphate aminotransferase subfamily. In terms of assembly, homodimer. It depends on pyridoxal 5'-phosphate as a cofactor.

The enzyme catalyses L-histidinol phosphate + 2-oxoglutarate = 3-(imidazol-4-yl)-2-oxopropyl phosphate + L-glutamate. It participates in amino-acid biosynthesis; L-histidine biosynthesis; L-histidine from 5-phospho-alpha-D-ribose 1-diphosphate: step 7/9. This Acinetobacter baumannii (strain ACICU) protein is Histidinol-phosphate aminotransferase.